The chain runs to 380 residues: Queuine tRNA-ribosyltransferase (380 aa).

Asp-96 acts as the Proton acceptor in catalysis. Substrate is bound by residues 96 to 100 (DSGGF), Asp-150, Gln-193, and Gly-220. The tract at residues 251-257 (GVGAPDS) is RNA binding. Asp-270 acts as the Nucleophile in catalysis. The interval 275 to 279 (TRIAR) is RNA binding; important for wobble base 34 recognition. Zn(2+) contacts are provided by Cys-308, Cys-310, Cys-313, and His-339.

The protein belongs to the queuine tRNA-ribosyltransferase family. As to quaternary structure, homodimer. Within each dimer, one monomer is responsible for RNA recognition and catalysis, while the other monomer binds to the replacement base PreQ1. Requires Zn(2+) as cofactor.

The enzyme catalyses 7-aminomethyl-7-carbaguanine + guanosine(34) in tRNA = 7-aminomethyl-7-carbaguanosine(34) in tRNA + guanine. It participates in tRNA modification; tRNA-queuosine biosynthesis. Catalyzes the base-exchange of a guanine (G) residue with the queuine precursor 7-aminomethyl-7-deazaguanine (PreQ1) at position 34 (anticodon wobble position) in tRNAs with GU(N) anticodons (tRNA-Asp, -Asn, -His and -Tyr). Catalysis occurs through a double-displacement mechanism. The nucleophile active site attacks the C1' of nucleotide 34 to detach the guanine base from the RNA, forming a covalent enzyme-RNA intermediate. The proton acceptor active site deprotonates the incoming PreQ1, allowing a nucleophilic attack on the C1' of the ribose to form the product. After dissociation, two additional enzymatic reactions on the tRNA convert PreQ1 to queuine (Q), resulting in the hypermodified nucleoside queuosine (7-(((4,5-cis-dihydroxy-2-cyclopenten-1-yl)amino)methyl)-7-deazaguanosine). In Streptococcus thermophilus (strain ATCC BAA-491 / LMD-9), this protein is Queuine tRNA-ribosyltransferase.